Here is a 211-residue protein sequence, read N- to C-terminus: uncharacterized protein (211 aa).

The first 20 residues, 1-20, serve as a signal peptide directing secretion; sequence MSRVQISTVLAIDTATPAVT.

It to M.leprae ML0378.

This is an uncharacterized protein from Mycobacterium tuberculosis (strain CDC 1551 / Oshkosh).